The sequence spans 141 residues: Hemoglobin subunit alpha (141 aa).

One can recognise a Globin domain in the interval 1–141 (VLSAADKTHV…VSTVLVSKYR (141 aa)). Ser-3 carries the post-translational modification Phosphoserine. The residue at position 7 (Lys-7) is an N6-succinyllysine. Phosphothreonine is present on Thr-8. Lys-11 carries the N6-succinyllysine modification. N6-acetyllysine; alternate is present on Lys-16. At Lys-16 the chain carries N6-succinyllysine; alternate. Residue Ser-35 is modified to Phosphoserine. N6-succinyllysine is present on Lys-40. Phosphoserine is present on Ser-49. Position 58 (His-58) interacts with O2. Position 87 (His-87) interacts with heme b. The residue at position 102 (Ser-102) is a Phosphoserine. Thr-108 carries the post-translational modification Phosphothreonine. Phosphoserine is present on Ser-124. Position 134 is a phosphothreonine (Thr-134). The residue at position 138 (Ser-138) is a Phosphoserine.

The protein belongs to the globin family. In terms of assembly, heterotetramer of two alpha chains and two beta chains. As to expression, red blood cells.

Involved in oxygen transport from the lung to the various peripheral tissues. In terms of biological role, hemopressin acts as an antagonist peptide of the cannabinoid receptor CNR1. Hemopressin-binding efficiently blocks cannabinoid receptor CNR1 and subsequent signaling. The protein is Hemoglobin subunit alpha (HBA) of Dasypus novemcinctus (Nine-banded armadillo).